The primary structure comprises 57 residues: Large ribosomal subunit protein bL32c (57 aa).

This sequence belongs to the bacterial ribosomal protein bL32 family.

The protein resides in the plastid. Its subcellular location is the chloroplast. This Phalaenopsis aphrodite subsp. formosana (Moth orchid) protein is Large ribosomal subunit protein bL32c.